The following is a 413-amino-acid chain: MASKSLVVLSACIIIGSAVPVEKLPVLKSQPAEVLFRESQPTVLECIIEGQEEGVKYTWTKDGKDFKWTEHNAAQRTNEGSLVFLSPQPSDEGHYQCFAQTAAGVASSRVISFKRTYLVAEPAKTHEKTPVEGKPFQLDCVIPNAYPKPEIFWKKSLSGADPNADSANLGRRVTAGPDGNLYFTTVEKEDVSDIYKYVCVAKSPAHDGEVRLVEYIIKEVTKDTSGYKGELVPQYLSKDIVAKVGSVTMIYCMYGGKPQGFPDYFKDGKDVNGDAGGRITRHNRTSGKRLLIKETLLEDQGTYTCEESNGVGKPVKHSLKVTVVSAPKYVKSPEKVIIAKQGQDVTIPCQVTGLPAPKVTWTHNAQPLSGGKTTVTESGLIIKGLQKGDKGYYGCRSTNEHGDEYVETLVQVN.

Residues 1–18 (MASKSLVVLSACIIIGSA) form the signal peptide. 4 Ig-like C2-type domains span residues 25–112 (PVLK…RVIS), 122–211 (PAKT…GEVR), 233–322 (PQYL…LKVT), and 327–413 (PKYV…VQVN). 4 cysteine pairs are disulfide-bonded: C46–C97, C140–C199, C252–C305, and C349–C395. N283 is a glycosylation site (N-linked (GlcNAc...) asparagine).

The protein belongs to the hemolin family. As to expression, expressed in larval bristles.

The protein localises to the secreted. Increased activity in presence of phospholipids (low concentrations) and calcium ions. Inhibited by PMSF. Not affected by EDTA and E-64. Its function is as follows. Bristle toxin involved in caterpillar defense by participating in hemorrhagic syndrome characterized by a consumptive coagulopathy. Exhibits procoagulant activity through selective factor X proteolytic activation. Activates factor X in a dose- and time-dependent manner but does not activate gamma-carboxyglutamic acid domainless factor X. Its activity does not depend on calcium ions. Also functions as a growth stimulator and an inhibitor of cellular death for endothelial cells. In vitro, increases proliferation of human umbilical vein endothelial cells (HUVEC) and inhibits the apoptosis induced by starvation. Also increases slightly the complement decay-accelerating factor (CD55), which protects cells from complement-mediated lysis. On the other hand, does not alter the release or expression of von Willebrand factor (VWF), tissue factor (F3), intercellular adhesion molecule-1 (ICAM1), interleukin-8 (CXCL8), and prostacyclin. Does not show fibrinolytic or fibrinogenolytic activities. This is Hemolin from Lonomia obliqua (Moth).